The sequence spans 182 residues: Keratin, type II cytoskeletal 68 kDa, component IA (182 aa).

In terms of domain architecture, IF rod spans 1–66 (DAEQHGEVAL…TLLEGEECRM (66 aa)). The segment at 1–66 (DAEQHGEVAL…TLLEGEECRM (66 aa)) is coil 2B. The interval 67–86 (SGECQSSVSIEMVHNTTSSS) is H2 subdomain. A tail region spans residues 67–182 (SGECQSSVSI…SQSQRSHHKL (116 aa)). Residues 87 to 162 (SGGSGALGGG…GSCAVSGVGG (76 aa)) form a V2 subdomain region. The span at 104-124 (GSGGLGSGSLGSGRLGSGGRG) shows a compositional bias: gly residues. The tract at residues 104–182 (GSGGLGSGSL…SQSQRSHHKL (79 aa)) is disordered. 2 stretches are compositionally biased toward low complexity: residues 144–158 (VRGSVSNSGGSCAVS) and 165–176 (SVRVTQSSSQSQ). An E2 subdomain region spans residues 163-182 (RGSVRVTQSSSQSQRSHHKL).

The protein belongs to the intermediate filament family. Heterotetramer of two type I and two type II keratins.

In Bos taurus (Bovine), this protein is Keratin, type II cytoskeletal 68 kDa, component IA.